Reading from the N-terminus, the 524-residue chain is Chromosomal replication initiator protein DnaA (524 aa).

A domain I, interacts with DnaA modulators region spans residues 1–85 (MSQNSSSLLE…TRVLSLRMGR (85 aa)). Residues 85–182 (RSFSLAVSVE…TPAHNPNREV (98 aa)) are domain II. The disordered stretch occupies residues 95-183 (PEQEIPETPA…PAHNPNREVS (89 aa)). Positions 148 to 158 (APEPHPAPIAD) are enriched in pro residues. Positions 183–399 (SLNPKYTFES…GALIRVSAYS (217 aa)) are domain III, AAA+ region. The ATP site is built by Gly227, Gly229, Lys230, and Thr231. Residues 400–524 (SLINQPIDKE…TQLIKSRGRN (125 aa)) are domain IV, binds dsDNA.

It belongs to the DnaA family. As to quaternary structure, oligomerizes as a right-handed, spiral filament on DNA at oriC.

The protein localises to the cytoplasm. Functionally, plays an essential role in the initiation and regulation of chromosomal replication. ATP-DnaA binds to the origin of replication (oriC) to initiate formation of the DNA replication initiation complex once per cell cycle. Binds the DnaA box (a 9 base pair repeat at the origin) and separates the double-stranded (ds)DNA. Forms a right-handed helical filament on oriC DNA; dsDNA binds to the exterior of the filament while single-stranded (ss)DNA is stabiized in the filament's interior. The ATP-DnaA-oriC complex binds and stabilizes one strand of the AT-rich DNA unwinding element (DUE), permitting loading of DNA polymerase. After initiation quickly degrades to an ADP-DnaA complex that is not apt for DNA replication. Binds acidic phospholipids. This is Chromosomal replication initiator protein DnaA from Corynebacterium glutamicum (strain ATCC 13032 / DSM 20300 / JCM 1318 / BCRC 11384 / CCUG 27702 / LMG 3730 / NBRC 12168 / NCIMB 10025 / NRRL B-2784 / 534).